Reading from the N-terminus, the 512-residue chain is MGIQAAEISAILKEQIKNFGQEAEVAEVGRVLSVGDGIARVHGLDNVQAGEMVEFPGGIRGMALNLEIDNVGVVIFGSDRDIKEGDIVKRTKSIVDVPVGDALLGRVVDGLGNPLDGKGPIETTERSIADVKAPGIIPRKSVHEPMATGLKSVDAMIPIGRGQRELIIGDRQTGKTAVALDTILNQKAYNDAAGDDESKKLYCVYVAVGQKRSTVAQLVKKLEETGAIEYSIVVAATASDPAPMQFLAPYAATSMAEFFRDNGRHALIIYDDLSKQAVSYRQMSLLLRRPPGREAYPGDVFYLHSRLLERSAKLGDDHGNGSLTALPIIETQGGDVSAFIPTNVISITDGQIFLETELFYQGIRPAVNTGLSVSRVGSSAQTNAMKSVAGPVKLELAQYREMAAFAQFGSDLDAATQQLLNRGARLTELMKQPQYSPLTNAEIVCVIFAGTKGYLDKIPVGDVGRYEKGLLAHLRGKHKGLLDYITKEDPKIKGEAEDKIRAALDEFAATFA.

Glycine 169–threonine 176 contributes to the ATP binding site.

The protein belongs to the ATPase alpha/beta chains family. In terms of assembly, F-type ATPases have 2 components, CF(1) - the catalytic core - and CF(0) - the membrane proton channel. CF(1) has five subunits: alpha(3), beta(3), gamma(1), delta(1), epsilon(1). CF(0) has four main subunits: a(1), b(1), b'(1) and c(9-12).

Its subcellular location is the cell inner membrane. The catalysed reaction is ATP + H2O + 4 H(+)(in) = ADP + phosphate + 5 H(+)(out). Its function is as follows. Produces ATP from ADP in the presence of a proton gradient across the membrane. The alpha chain is a regulatory subunit. This chain is ATP synthase subunit alpha 2, found in Dinoroseobacter shibae (strain DSM 16493 / NCIMB 14021 / DFL 12).